We begin with the raw amino-acid sequence, 199 residues long: dITP/XTP pyrophosphatase (199 aa).

7 to 12 (SNNPGK) is a substrate binding site. The active-site Proton acceptor is D68. Position 68 (D68) interacts with Mg(2+). Substrate contacts are provided by residues A69, 154–157 (FGFD), K177, and 182–183 (HR).

Belongs to the HAM1 NTPase family. Homodimer. Mg(2+) serves as cofactor.

It catalyses the reaction XTP + H2O = XMP + diphosphate + H(+). The catalysed reaction is dITP + H2O = dIMP + diphosphate + H(+). The enzyme catalyses ITP + H2O = IMP + diphosphate + H(+). Its function is as follows. Pyrophosphatase that catalyzes the hydrolysis of nucleoside triphosphates to their monophosphate derivatives, with a high preference for the non-canonical purine nucleotides XTP (xanthosine triphosphate), dITP (deoxyinosine triphosphate) and ITP. Seems to function as a house-cleaning enzyme that removes non-canonical purine nucleotides from the nucleotide pool, thus preventing their incorporation into DNA/RNA and avoiding chromosomal lesions. This Verminephrobacter eiseniae (strain EF01-2) protein is dITP/XTP pyrophosphatase.